A 246-amino-acid chain; its full sequence is 3-deoxy-manno-octulosonate cytidylyltransferase (246 aa).

This sequence belongs to the KdsB family.

It localises to the cytoplasm. The enzyme catalyses 3-deoxy-alpha-D-manno-oct-2-ulosonate + CTP = CMP-3-deoxy-beta-D-manno-octulosonate + diphosphate. Its pathway is nucleotide-sugar biosynthesis; CMP-3-deoxy-D-manno-octulosonate biosynthesis; CMP-3-deoxy-D-manno-octulosonate from 3-deoxy-D-manno-octulosonate and CTP: step 1/1. It functions in the pathway bacterial outer membrane biogenesis; lipopolysaccharide biosynthesis. Functionally, activates KDO (a required 8-carbon sugar) for incorporation into bacterial lipopolysaccharide in Gram-negative bacteria. In Rickettsia akari (strain Hartford), this protein is 3-deoxy-manno-octulosonate cytidylyltransferase.